We begin with the raw amino-acid sequence, 173 residues long: Co-chaperone protein HscB (173 aa).

A J domain is found at 2 to 74; that stretch reads DYFTLFGLPV…LKRAEYMLSL (73 aa).

It belongs to the HscB family. As to quaternary structure, interacts with HscA and stimulates its ATPase activity. Interacts with IscU.

Functionally, co-chaperone involved in the maturation of iron-sulfur cluster-containing proteins. Seems to help targeting proteins to be folded toward HscA. This chain is Co-chaperone protein HscB, found in Serratia proteamaculans (strain 568).